Consider the following 518-residue polypeptide: Serine/threonine-protein kinase UL13 (518 aa).

Disordered regions lie at residues 1-22 (MDES…PQGA) and 39-120 (SRRA…PSPP). A compositionally biased stretch (low complexity) spans 44 to 61 (GRPSGPSPRDGAVSGARP). Residues 151–518 (PGARSFGGSG…ANPAARHSLS (368 aa)) form the Protein kinase domain. Residues 157–165 (GGSGGYGEV) and K176 contribute to the ATP site. Residue D277 is the Proton acceptor of the active site.

The protein belongs to the protein kinase superfamily. Ser/Thr protein kinase family. In terms of processing, autophosphorylated.

It is found in the virion tegument. It localises to the host nucleus. The catalysed reaction is L-seryl-[protein] + ATP = O-phospho-L-seryl-[protein] + ADP + H(+). It catalyses the reaction L-threonyl-[protein] + ATP = O-phospho-L-threonyl-[protein] + ADP + H(+). Functionally, multifunctional serine/threonine kinase that plays a role in several processes including egress of virus particles from the nucleus, modulation of the actin cytoskeleton and regulation of viral and cellular gene expression. Regulates the nuclear localization of viral envelopment factors UL34 and UL31, by phosphorylating the US3 kinase, indicating a role in nuclear egress. Disrupts host nuclear lamins, including LMNA and LMNB1. Phosphorylates the viral Fc receptor composed of glycoproteins E (gE) and I (gI). Phosphorylation of glycoprotein E (gE) by UL13 alters its subcellular localization, from the host early endosome to the plasma membrane. Participates in the transcriptional regulation of cellular and viral mRNAs mainly by phosphorylating the viral transcriptional regulator ICP22. Additional substrates have been identified, including UL41, UL49 or host EF1D. The protein is Serine/threonine-protein kinase UL13 of Homo sapiens (Human).